The primary structure comprises 466 residues: Hydroxyacid-oxoacid transhydrogenase, mitochondrial (466 aa).

At K444 the chain carries N6-acetyllysine. S451 bears the Phosphoserine mark.

This sequence belongs to the iron-containing alcohol dehydrogenase family. Hydroxyacid-oxoacid transhydrogenase subfamily.

Its subcellular location is the mitochondrion. The catalysed reaction is (S)-3-hydroxybutanoate + 2-oxoglutarate = (R)-2-hydroxyglutarate + acetoacetate. The enzyme catalyses 4-hydroxybutanoate + 2-oxoglutarate = (R)-2-hydroxyglutarate + succinate semialdehyde. Catalyzes the cofactor-independent reversible oxidation of gamma-hydroxybutyrate (GHB) to succinic semialdehyde (SSA) coupled to reduction of 2-ketoglutarate (2-KG) to D-2-hydroxyglutarate (D-2-HG). L-3-hydroxybutyrate (L-3-OHB) is also a substrate for HOT when using 2-KG as hydrogen acceptor, resulting in the formation of D-2-HG. This is Hydroxyacid-oxoacid transhydrogenase, mitochondrial (ADHFE1) from Bos taurus (Bovine).